The primary structure comprises 560 residues: Alpha-farnesene synthase (560 aa).

Residues Asp-308, Asp-312, and Glu-462 each contribute to the Mg(2+) site. Residues 308 to 312 (DDIYD) carry the DDXXD motif motif.

The protein belongs to the terpene synthase family. Tpsa subfamily. The cofactor is Mg(2+). Expressed in the rind tissues of ripe fruits.

It is found in the cytoplasm. The enzyme catalyses (2E,6E)-farnesyl diphosphate = (3E,6E)-alpha-farnesene + diphosphate. Its pathway is secondary metabolite biosynthesis; terpenoid biosynthesis. Functionally, sesquiterpene synthase producing exclusively alpha-farnesene. Associated with the production of sesquiterpenes responsible for the aroma of the fruit. In Cucumis melo (Muskmelon), this protein is Alpha-farnesene synthase.